Reading from the N-terminus, the 291-residue chain is Phosphate-binding protein PstS 2 (291 aa).

A signal peptide spans 1 to 21; the sequence is MKFKKMLTLAAIGLSGFGLVA. Cys-22 carries the N-palmitoyl cysteine lipid modification. Cys-22 carries the S-diacylglycerol cysteine lipid modification.

It belongs to the PstS family. The complex is composed of two ATP-binding proteins (PstB), two transmembrane proteins (PstC and PstA) and a solute-binding protein (PstS).

The protein resides in the cell membrane. In terms of biological role, part of the ABC transporter complex PstSACB involved in phosphate import. This chain is Phosphate-binding protein PstS 2 (pstS2), found in Streptococcus pneumoniae serotype 4 (strain ATCC BAA-334 / TIGR4).